A 254-amino-acid chain; its full sequence is Small ribosomal subunit protein uS3 (254 aa).

The region spanning 38 to 106 is the KH type-2 domain; it reads IRKYVLARIP…DVQINIFEIK (69 aa). Low complexity predominate over residues 215–238; it reads NVGNAASGASSSSNNDNASPNQGG. Residues 215–254 are disordered; it reads NVGNAASGASSSSNNDNASPNQGGPRRKRGGEGNRKKSNK. Positions 244 to 254 are enriched in basic and acidic residues; that stretch reads GGEGNRKKSNK.

This sequence belongs to the universal ribosomal protein uS3 family. As to quaternary structure, part of the 30S ribosomal subunit. Forms a tight complex with proteins S10 and S14.

In terms of biological role, binds the lower part of the 30S subunit head. Binds mRNA in the 70S ribosome, positioning it for translation. The protein is Small ribosomal subunit protein uS3 of Cytophaga hutchinsonii (strain ATCC 33406 / DSM 1761 / CIP 103989 / NBRC 15051 / NCIMB 9469 / D465).